A 424-amino-acid polypeptide reads, in one-letter code: Enolase (424 aa).

(2R)-2-phosphoglycerate is bound at residue Gln-165. Glu-207 (proton donor) is an active-site residue. Residues Asp-244, Glu-283, and Asp-310 each contribute to the Mg(2+) site. 4 residues coordinate (2R)-2-phosphoglycerate: Lys-335, Arg-364, Ser-365, and Lys-386. Residue Lys-335 is the Proton acceptor of the active site.

The protein belongs to the enolase family. Mg(2+) serves as cofactor.

The protein localises to the cytoplasm. Its subcellular location is the secreted. The protein resides in the cell surface. The catalysed reaction is (2R)-2-phosphoglycerate = phosphoenolpyruvate + H2O. Its pathway is carbohydrate degradation; glycolysis; pyruvate from D-glyceraldehyde 3-phosphate: step 4/5. Its function is as follows. Catalyzes the reversible conversion of 2-phosphoglycerate (2-PG) into phosphoenolpyruvate (PEP). It is essential for the degradation of carbohydrates via glycolysis. This chain is Enolase, found in Chlamydia trachomatis serovar L2 (strain ATCC VR-902B / DSM 19102 / 434/Bu).